The following is a 216-amino-acid chain: Ras-like protein rasW (216 aa).

16-23 (GDGGVGKT) provides a ligand contact to GTP. Residues 38–46 (YDPTIEDSY) carry the Effector region motif. Residues 63 to 67 (DTAGQ) and 122 to 125 (NKID) contribute to the GTP site. The tract at residues 171–193 (KRKEDPQSHKPSKDSDSKKPLVN) is disordered. Over residues 172–189 (RKEDPQSHKPSKDSDSKK) the composition is skewed to basic and acidic residues. Residue Cys-213 is modified to Cysteine methyl ester. Cys-213 carries the S-geranylgeranyl cysteine lipid modification. A propeptide spans 214–216 (KMM) (removed in mature form).

This sequence belongs to the small GTPase superfamily. Ras family.

It is found in the cell membrane. The enzyme catalyses GTP + H2O = GDP + phosphate + H(+). In terms of biological role, ras proteins bind GDP/GTP and possess intrinsic GTPase activity. The sequence is that of Ras-like protein rasW (rasW) from Dictyostelium discoideum (Social amoeba).